A 173-amino-acid polypeptide reads, in one-letter code: Alpha-crystallin A chain (173 aa).

M1 is subject to N-acetylmethionine. The 111-residue stretch at 52–162 folds into the sHSP domain; it reads LFRSVLESGI…SHSERPIPVS (111 aa). Residues H100, E102, H107, and H154 each contribute to the Zn(2+) site. The segment at 142-173 is disordered; that stretch reads SGPKVPSNMDPSHSERPIPVSREEKPTSAPSS. The span at 153–167 shows a compositional bias: basic and acidic residues; that stretch reads SHSERPIPVSREEKP. O-linked (GlcNAc) serine glycosylation occurs at S162.

It belongs to the small heat shock protein (HSP20) family. Heteropolymer composed of three CRYAA and one CRYAB subunits. Inter-subunit bridging via zinc ions enhances stability, which is crucial as there is no protein turn over in the lens. Can also form homodimers and homotetramers (dimers of dimers) which serve as the building blocks of homooligomers. Within homooligomers, the zinc-binding motif is created from residues of 3 different molecules. His-100 and Glu-102 from one molecule are ligands of the zinc ion, and His-107 and His-154 residues from additional molecules complete the site with tetrahedral coordination geometry.

It is found in the cytoplasm. It localises to the nucleus. Functionally, contributes to the transparency and refractive index of the lens. May act as a chaperone, preventing aggregation of various proteins under a wide range of stress conditions. The polypeptide is Alpha-crystallin A chain (CRYAA) (Gallus gallus (Chicken)).